Here is a 260-residue protein sequence, read N- to C-terminus: Hydroxypyruvate/pyruvate aldolase Bphyt_0320 (260 aa).

H48 (proton acceptor) is an active-site residue. The a divalent metal cation site is built by E157 and D183.

It belongs to the HpcH/HpaI aldolase family. Mn(2+) serves as cofactor. Mg(2+) is required as a cofactor. It depends on Co(2+) as a cofactor.

It carries out the reaction D-glyceraldehyde + 3-hydroxypyruvate = 2-dehydro-D-gluconate. The catalysed reaction is D-glyceraldehyde + pyruvate = 2-dehydro-3-deoxy-L-galactonate. The enzyme catalyses 2-dehydro-3-deoxy-D-gluconate = D-glyceraldehyde + pyruvate. Its function is as follows. Aldolase which can catalyze in vitro the aldolisation reaction between hydroxypyruvate (HPA) or pyruvate (PA) and D-glyceraldehyde (D-GA). The condensation of hydroxypyruvate and D-glyceraldehyde produces 2-dehydro-D-gluconate. The condensation of pyruvate and D-glyceraldehyde produces 2-dehydro-3-deoxy-L-galactonate as the major product and 2-dehydro-3-deoxy-D-gluconate. Also catalyzes the retro-aldol type decarboxylation of oxaloacetate, a general property of known pyruvate aldolases. The protein is Hydroxypyruvate/pyruvate aldolase Bphyt_0320 of Paraburkholderia phytofirmans (strain DSM 17436 / LMG 22146 / PsJN) (Burkholderia phytofirmans).